We begin with the raw amino-acid sequence, 416 residues long: MESIIEDVRVRKILDSRGNPTVEVDVITWNGFGRAAAPSGASTGSREVAAFPSGGVDEIITEVEDIISSELIGMDAVDLQDIDLVLKEIDGTENLSSLGGNTVVAVSMATAKAAASSYNMPLYRFLGGNLATSIPYPLGNMINGGAHAGKNAPDIQEFLVVPVGAEDITEAVFANAAVHKRIRELIQKKDPSFAGGKGDEGGWVPSLSNGDALEIQATACEEVTDELGVEVRPSLDLAASEFWDPEIEKYVYRQENVQKDTGEQIEFVKEIIETYDMYYVEDPLHEGDLEGFAELTSLVGDRCMICGDDIFVTNREILREGIEMGAANAIIIKPNQIGTLTDTYLTVKLALENRYTPVVSHRSGETTDDTIAHLAVAFGAPLIKTGAIGGERIAKLNELIRIQEEIPYSRMADLPF.

Position 156 (glutamine 156) interacts with (2R)-2-phosphoglycerate. Glutamate 200 (proton donor) is an active-site residue. Residues aspartate 236, glutamate 281, and aspartate 308 each coordinate Mg(2+). Residues lysine 333, arginine 362, serine 363, and lysine 384 each contribute to the (2R)-2-phosphoglycerate site. The active-site Proton acceptor is the lysine 333.

It belongs to the enolase family. It depends on Mg(2+) as a cofactor.

It localises to the cytoplasm. The protein localises to the secreted. The protein resides in the cell surface. The catalysed reaction is (2R)-2-phosphoglycerate = phosphoenolpyruvate + H2O. It functions in the pathway carbohydrate degradation; glycolysis; pyruvate from D-glyceraldehyde 3-phosphate: step 4/5. Catalyzes the reversible conversion of 2-phosphoglycerate (2-PG) into phosphoenolpyruvate (PEP). It is essential for the degradation of carbohydrates via glycolysis. The chain is Enolase from Methanothermobacter thermautotrophicus (strain ATCC 29096 / DSM 1053 / JCM 10044 / NBRC 100330 / Delta H) (Methanobacterium thermoautotrophicum).